Here is a 250-residue protein sequence, read N- to C-terminus: Vacuolar protein sorting-associated protein 22 homolog 1 (250 aa).

A coiled-coil region spans residues 35–55 (MKEQLSTFRSQLEEFARKHKN).

It belongs to the SNF8 family. As to quaternary structure, component of the endosomal sorting complex required for transport II (ESCRT-II), composed of VPS22, VPS25 and VPS36.

It localises to the endosome. Functionally, component of the endosomal sorting complex required for transport II (ESCRT-II), which is required for multivesicular body (MVB) formation and sorting of endosomal cargo proteins into MVBs. The ESCRT-II complex is probably involved in the recruitment of the ESCRT-III complex. This is Vacuolar protein sorting-associated protein 22 homolog 1 (VP22-1) from Arabidopsis thaliana (Mouse-ear cress).